Consider the following 665-residue polypeptide: Translation factor GUF1 homolog, mitochondrial (665 aa).

Residues 1-35 (MAGAAVLRRSARRIYRHLAAAPAFSRSVLQQPKRL) constitute a mitochondrion transit peptide. Residues 34 to 53 (RLLSSQSSPEHGARGAVSGS) form a disordered region. Positions 61-249 (ERVRNFSIIA…AVIERIPSPP (189 aa)) constitute a tr-type G domain. Residues 70–77 (AHVDHGKS), 142–146 (DTPGH), and 196–199 (NKID) each bind GTP.

This sequence belongs to the TRAFAC class translation factor GTPase superfamily. Classic translation factor GTPase family. LepA subfamily.

It is found in the mitochondrion inner membrane. The enzyme catalyses GTP + H2O = GDP + phosphate + H(+). Functionally, promotes mitochondrial protein synthesis. May act as a fidelity factor of the translation reaction, by catalyzing a one-codon backward translocation of tRNAs on improperly translocated ribosomes. Binds to mitochondrial ribosomes in a GTP-dependent manner. The protein is Translation factor GUF1 homolog, mitochondrial of Sorghum bicolor (Sorghum).